Here is a 703-residue protein sequence, read N- to C-terminus: MSSFLDILGDGHVNFEKCGDVVVSPKDNMVAMLCHFCKDIFTHLPEFMRHLQWSHSDVLQFTKEQNVYRVEELMSLESSEDDVQSQANSCSSGDSGLAGEMEDADGEPGSSECLANNVEIMNALAAFDVDVDVLNNVSHEQSYSKNPPDSRTEGFRCARKPGRVEKPPSICDLKSYNITRHSRKREAIKQRLSSVKKRIMRSLENDVSKPRLNKLRSKLNNSLSSNISGPPKQSKMPSLLENSSVNELPAVLESTNPPSFDSEQPYVVSTTIKPSIRPCPSRTAVQTDRNISHQPVARRSTVNIERVDILPPINIKQKMKMSAKDIPFWESIIISSVASQQPSELNTTNNAVDQPPKRPERRSSLTVISSSPIQAMKPMRRSSMTRENTSPESSRILRSGEVESPAKANKRTKDSFEETSSSNEKGNAKRSKLEQNRCSMNFSLSASVTEYIRSDLKTSKLDLDSLLRLTEPLESDAFENTLVEDQVKNATKMGSPQKEFTKLQIGVKPEMEALKEDLRLLKTVGLLVLKDSCFEDKLPFEQSESFRKTAAKFSKIYHTYDTIWSYRKTKTIGVHQRLTEQLNSFTEEVNREIDCHLTTNEIKRILNLINSWYAYQIDQRFFRKATLSYSVEHYMFLFHFLPKINPTVYFCECCEEIFPNEARYKKHVQSVHAVHAFTCSECGKSFKRLYFYDKHLKTVHLKP.

The C2H2-type 1 zinc-finger motif lies at 32 to 55; that stretch reads MLCHFCKDIFTHLPEFMRHLQWSH. Disordered stretches follow at residues 78–111, 140–161, 205–239, and 339–434; these read SSEDDVQSQANSCSSGDSGLAGEMEDADGEPGSS, EQSYSKNPPDSRTEGFRCARKP, NDVSKPRLNKLRSKLNNSLSSNISGPPKQSKMPSL, and SQQP…SKLE. Residues 84–94 show a composition bias toward polar residues; that stretch reads QSQANSCSSGD. The segment covering 148–161 has biased composition (basic and acidic residues); sequence PDSRTEGFRCARKP. 2 stretches are compositionally biased toward polar residues: residues 339–352 and 364–373; these read SQQPSELNTTNNAV and SLTVISSSPI. 2 consecutive C2H2-type zinc fingers follow at residues 649-672 and 677-700; these read YFCECCEEIFPNEARYKKHVQSVH and FTCSECGKSFKRLYFYDKHLKTVH.

It belongs to the Teflon family.

The protein resides in the nucleus. It localises to the chromosome. Functionally, specifically required in males for proper segregation of autosomal bivalents at meiosis I. Expression is required in the male germ line prior to spermatocyte stage S4. May have a role as a bridging molecule maintaining adhesion to hold autosome bivalents together via heterochromatic connections. The protein is Protein teflon of Drosophila persimilis (Fruit fly).